The primary structure comprises 590 residues: Bacillolysin (590 aa).

A signal peptide spans 1 to 24 (MKKVWFSLLGGAMLLGSVASGASA). Positions 25-286 (ESSVSGPAQL…GSIVFQYDII (262 aa)) are cleaved as a propeptide — activation peptide. Ca(2+)-binding residues include Asp-339, Asp-341, and Asp-419. His-423 serves as a coordination point for Zn(2+). The active site involves Glu-424. Positions 427 and 447 each coordinate Zn(2+). Ca(2+) is bound by residues Asp-466, Tyr-469, Thr-470, Ile-473, and Asp-476. His-507 functions as the Proton donor in the catalytic mechanism.

The protein belongs to the peptidase M4 family. It depends on Ca(2+) as a cofactor. The cofactor is Zn(2+).

The protein localises to the secreted. It carries out the reaction Similar, but not identical, to that of thermolysin.. Involved in the generation of beta- and alpha-amylases from the large amylase precursor. This is Bacillolysin (npr) from Paenibacillus polymyxa (Bacillus polymyxa).